The sequence spans 166 residues: Thiol peroxidase (166 aa).

A Thioredoxin domain is found at 18–166 (LKVGDKAPDV…NYEALLKVLK (149 aa)). Catalysis depends on cysteine 60, which acts as the Cysteine sulfenic acid (-SOH) intermediate. Cysteine 60 and cysteine 94 are joined by a disulfide.

Belongs to the peroxiredoxin family. Tpx subfamily. As to quaternary structure, homodimer.

It carries out the reaction a hydroperoxide + [thioredoxin]-dithiol = an alcohol + [thioredoxin]-disulfide + H2O. In terms of biological role, thiol-specific peroxidase that catalyzes the reduction of hydrogen peroxide and organic hydroperoxides to water and alcohols, respectively. Plays a role in cell protection against oxidative stress by detoxifying peroxides. This Helicobacter pylori (strain ATCC 700392 / 26695) (Campylobacter pylori) protein is Thiol peroxidase.